A 244-amino-acid polypeptide reads, in one-letter code: Venom nerve growth factor 2 (244 aa).

An N-terminal signal peptide occupies residues 1-18 (MSMLCYTLIIAFLIGTWA). Positions 19-125 (APKSEDNVPL…TLNRNIRAKR (107 aa)) are excised as a propeptide. The span at 47–66 (GLKTSRNTDQRHPAPKKAED) shows a compositional bias: basic and acidic residues. Positions 47-67 (GLKTSRNTDQRHPAPKKAEDQ) are disordered. Disulfide bonds link Cys139–Cys205, Cys181–Cys233, and Cys193–Cys235.

It belongs to the NGF-beta family. Homodimer; non-covalently linked. Expressed by the venom gland.

It is found in the secreted. Nerve growth factor is important for the development and maintenance of the sympathetic and sensory nervous systems. It stimulates division and differentiation of sympathetic and embryonic sensory neurons as well as basal forebrain cholinergic neurons in the brain. Its relevance in the snake venom is not clear. However, it has been shown to inhibit metalloproteinase-dependent proteolysis of platelet glycoprotein Ib alpha, suggesting a metalloproteinase inhibition to prevent metalloprotease autodigestion and/or protection against prey proteases. Binds a lipid between the two protein chains in the homodimer. The lipid-bound form promotes histamine relase from mouse mast cells, contrary to the lipid-free form. This Tropidechis carinatus (Australian rough-scaled snake) protein is Venom nerve growth factor 2.